The sequence spans 332 residues: Glycerol-3-phosphate dehydrogenase [NAD(P)+] (332 aa).

NADPH contacts are provided by Ser11, Phe12, Arg32, and Lys106. Sn-glycerol 3-phosphate-binding residues include Lys106, Gly134, and Ser136. NADPH is bound at residue Ala138. Residues Lys189, Asp242, Ser252, Arg253, and Asn254 each contribute to the sn-glycerol 3-phosphate site. Lys189 (proton acceptor) is an active-site residue. Arg253 lines the NADPH pocket. Residues Val277 and Glu279 each contribute to the NADPH site.

The protein belongs to the NAD-dependent glycerol-3-phosphate dehydrogenase family.

The protein localises to the cytoplasm. It catalyses the reaction sn-glycerol 3-phosphate + NAD(+) = dihydroxyacetone phosphate + NADH + H(+). It carries out the reaction sn-glycerol 3-phosphate + NADP(+) = dihydroxyacetone phosphate + NADPH + H(+). The protein operates within membrane lipid metabolism; glycerophospholipid metabolism. In terms of biological role, catalyzes the reduction of the glycolytic intermediate dihydroxyacetone phosphate (DHAP) to sn-glycerol 3-phosphate (G3P), the key precursor for phospholipid synthesis. The sequence is that of Glycerol-3-phosphate dehydrogenase [NAD(P)+] from Clostridium acetobutylicum (strain ATCC 824 / DSM 792 / JCM 1419 / IAM 19013 / LMG 5710 / NBRC 13948 / NRRL B-527 / VKM B-1787 / 2291 / W).